Consider the following 198-residue polypeptide: Holliday junction resolvase RecU (198 aa).

Residues methionine 1 to asparagine 22 form a disordered region. The span at glutamine 11–asparagine 22 shows a compositional bias: polar residues. Residues threonine 81, aspartate 83, glutamate 96, and glutamine 115 each contribute to the Mg(2+) site.

The protein belongs to the RecU family. Mg(2+) serves as cofactor.

Its subcellular location is the cytoplasm. The enzyme catalyses Endonucleolytic cleavage at a junction such as a reciprocal single-stranded crossover between two homologous DNA duplexes (Holliday junction).. In terms of biological role, endonuclease that resolves Holliday junction intermediates in genetic recombination. Cleaves mobile four-strand junctions by introducing symmetrical nicks in paired strands. Promotes annealing of linear ssDNA with homologous dsDNA. Required for DNA repair, homologous recombination and chromosome segregation. This is Holliday junction resolvase RecU from Streptococcus pneumoniae serotype 2 (strain D39 / NCTC 7466).